We begin with the raw amino-acid sequence, 410 residues long: Peptidase T (410 aa).

His79 is a binding site for Zn(2+). Residue Asp81 is part of the active site. Asp142 contacts Zn(2+). The active-site Proton acceptor is the Glu176. Residues Glu177, Asp199, and His381 each contribute to the Zn(2+) site.

The protein belongs to the peptidase M20B family. Requires Zn(2+) as cofactor.

The protein resides in the cytoplasm. It carries out the reaction Release of the N-terminal residue from a tripeptide.. Its function is as follows. Cleaves the N-terminal amino acid of tripeptides. This chain is Peptidase T, found in Bacillus anthracis (strain A0248).